Reading from the N-terminus, the 503-residue chain is Maturase K (503 aa).

It belongs to the intron maturase 2 family. MatK subfamily.

It localises to the plastid. The protein localises to the chloroplast. Its function is as follows. Usually encoded in the trnK tRNA gene intron. Probably assists in splicing its own and other chloroplast group II introns. This chain is Maturase K, found in Silene latifolia (White campion).